The sequence spans 156 residues: Small ribosomal subunit protein uS7 (156 aa).

It belongs to the universal ribosomal protein uS7 family. In terms of assembly, part of the 30S ribosomal subunit. Contacts proteins S9 and S11.

Its function is as follows. One of the primary rRNA binding proteins, it binds directly to 16S rRNA where it nucleates assembly of the head domain of the 30S subunit. Is located at the subunit interface close to the decoding center, probably blocks exit of the E-site tRNA. The polypeptide is Small ribosomal subunit protein uS7 (Acinetobacter baumannii (strain AB307-0294)).